Reading from the N-terminus, the 573-residue chain is Proton-coupled zinc antiporter SLC30A9, mitochondrial (573 aa).

Residues 66–108 (NCSTSGSGKDGSPTRPEEPKTTEKAQAAQPAAKGAGSKPQGLT) are disordered. The segment covering 90-104 (AQAAQPAAKGAGSKP) has biased composition (low complexity). A run of 5 helical transmembrane segments spans residues 244–264 (VVMV…LAWV), 319–339 (GVGI…MGLL), 347–367 (LLWA…TLLV), 397–417 (VVLL…GCMG), and 429–449 (SLGS…LIYT). The LXXLL motif motif lies at 467 to 471 (LTEFL).

The protein belongs to the cation diffusion facilitator (CDF) transporter (TC 2.A.4) family. SLC30A subfamily.

The protein localises to the mitochondrion membrane. Its subcellular location is the nucleus. It localises to the endoplasmic reticulum. It catalyses the reaction Zn(2+)(in) + 2 H(+)(out) = Zn(2+)(out) + 2 H(+)(in). In terms of biological role, mitochondrial proton-coupled zinc ion antiporter mediating the export of zinc from the mitochondria and involved in zinc homeostasis, zinc mobilization as well as mitochondrial morphology and health. In nucleus, may function as a secondary coactivator for nuclear receptors. The polypeptide is Proton-coupled zinc antiporter SLC30A9, mitochondrial (slc30a9) (Danio rerio (Zebrafish)).